The following is a 232-amino-acid chain: Large ribosomal subunit protein uL1 (232 aa).

This sequence belongs to the universal ribosomal protein uL1 family. As to quaternary structure, part of the 50S ribosomal subunit.

In terms of biological role, binds directly to 23S rRNA. The L1 stalk is quite mobile in the ribosome, and is involved in E site tRNA release. Its function is as follows. Protein L1 is also a translational repressor protein, it controls the translation of the L11 operon by binding to its mRNA. This chain is Large ribosomal subunit protein uL1, found in Amoebophilus asiaticus (strain 5a2).